The primary structure comprises 285 residues: Probable E3 ubiquitin-protein ligase IE1 (285 aa).

Residues 1-201 (MASKDSDVRC…LPGYWDRDDR (201 aa)) lie on the Cytoplasmic side of the membrane. An RING-CH-type zinc finger spans residues 124-183 (SIDEEGKQCWICRDGESLPEARYCNCYGDLQYCHEECLKTWISMSGEKKCKFCQTPYKVN). Positions 132, 135, 147, 149, 157, 160, 173, and 176 each coordinate Zn(2+). Residues 202-222 (FVFIAGFIGMGTILAGWIASF) form a helical membrane-spanning segment. At 223–238 (FYLLVVLCGKYFTYKD) the chain is on the extracellular side. Residues 239 to 259 (VMIVVGGLAIIQVVGLMFSLF) traverse the membrane as a helical segment. Over 260-285 (MYFQIGNLLRQYINYMTETNIDPLRT) the chain is Cytoplasmic.

It localises to the membrane. The enzyme catalyses S-ubiquitinyl-[E2 ubiquitin-conjugating enzyme]-L-cysteine + [acceptor protein]-L-lysine = [E2 ubiquitin-conjugating enzyme]-L-cysteine + N(6)-ubiquitinyl-[acceptor protein]-L-lysine.. It participates in protein modification; protein ubiquitination. Functionally, controls the expression of later classes of genes and also of the IE genes (Potential). E3 ubiquitin-protein ligase. E3 ubiquitin ligases accept ubiquitin from an E2 ubiquitin-conjugating enzyme in the form of a thioester and then directly transfer the ubiquitin to targeted substrates. In Bovine herpesvirus 4 (strain DN-599) (BoHV-4), this protein is Probable E3 ubiquitin-protein ligase IE1 (IE1).